A 227-amino-acid polypeptide reads, in one-letter code: MGASGRLLRAVIMGAPGSGKGTGSSRITKHFELKHLSSGDLLRQNMLQGTEIAVLAKSFIDQGKLIPDDDMTRLALHELKNLTQCSWLLDGFPRTLPQAEALDRVYQIDTVINLNVPFEVIKLRLTARWIHPASGRVYNIEFNPPKTVGIDDLTGEPLIQREDDKPETVIKRLKAYEAQTEPVLQYYQKKGVLETFSGTETNKIRPHVYSFLQMKVPETIQKASVTP.

GTP contacts are provided by glycine 17, glycine 19, lysine 20, glycine 21, and threonine 22. Lysine 20 is subject to N6-succinyllysine. An N6-acetyllysine; alternate modification is found at lysine 29. The residue at position 29 (lysine 29) is an N6-succinyllysine; alternate. Lysine 34 is subject to N6-acetyllysine. A Phosphoserine modification is found at serine 37. The interval 37–66 (SSGDLLRQNMLQGTEIAVLAKSFIDQGKLI) is NMP. AMP is bound by residues serine 38 and arginine 43. Lysine 57 bears the N6-succinyllysine mark. An N6-acetyllysine; alternate mark is found at lysine 64 and lysine 80. N6-succinyllysine; alternate occurs at positions 64 and 80. Lysine 64 is a binding site for AMP. Glycine 91, arginine 94, and glutamine 98 together coordinate AMP. The interval 127–164 (ARWIHPASGRVYNIEFNPPKTVGIDDLTGEPLIQREDD) is LID. The GTP site is built by arginine 128, tyrosine 138, asparagine 139, arginine 161, and arginine 172. N6-acetyllysine; alternate is present on residues lysine 174 and lysine 189. Lysine 174 and lysine 189 each carry N6-succinyllysine; alternate. Threonine 201 contributes to the GTP binding site. Lysine 203 carries the N6-acetyllysine modification.

The protein belongs to the adenylate kinase family. AK3 subfamily. As to quaternary structure, monomer.

It localises to the mitochondrion matrix. It carries out the reaction a ribonucleoside 5'-triphosphate + AMP = a ribonucleoside 5'-diphosphate + ADP. The enzyme catalyses GTP + AMP = GDP + ADP. The catalysed reaction is ITP + AMP = IDP + ADP. Its function is as follows. Mitochondrial adenylate kinase with a specific GTP:AMP phosphotransferase activity. Could also use ITP as phosphate donor. Its physiological function is to recycle GTP into GDP which is necessary for the TCA cycle in the mitochondrial matrix. The chain is GTP:AMP phosphotransferase AK3, mitochondrial from Rattus norvegicus (Rat).